Consider the following 713-residue polypeptide: Ribosomal RNA large subunit methyltransferase K/L (713 aa).

The THUMP domain occupies 43 to 154 (LAYRITLWTR…NGVITIAMNF (112 aa)).

This sequence belongs to the methyltransferase superfamily. RlmKL family.

It localises to the cytoplasm. It carries out the reaction guanosine(2445) in 23S rRNA + S-adenosyl-L-methionine = N(2)-methylguanosine(2445) in 23S rRNA + S-adenosyl-L-homocysteine + H(+). The catalysed reaction is guanosine(2069) in 23S rRNA + S-adenosyl-L-methionine = N(2)-methylguanosine(2069) in 23S rRNA + S-adenosyl-L-homocysteine + H(+). Its function is as follows. Specifically methylates the guanine in position 2445 (m2G2445) and the guanine in position 2069 (m7G2069) of 23S rRNA. The polypeptide is Ribosomal RNA large subunit methyltransferase K/L (Shewanella sp. (strain MR-4)).